Here is a 137-residue protein sequence, read N- to C-terminus: Probable S-adenosyl-L-methionine-binding protein MTH_1797 (137 aa).

The TsaA-like domain occupies 8–137 (IRPVGVVRSP…YYEDIDSLGF (130 aa)). S-adenosyl-L-methionine-binding positions include 25 to 27 (PAQ), 63 to 64 (HL), R87, L97, and 117 to 120 (LDGS).

It belongs to the tRNA methyltransferase O family.

The chain is Probable S-adenosyl-L-methionine-binding protein MTH_1797 from Methanothermobacter thermautotrophicus (strain ATCC 29096 / DSM 1053 / JCM 10044 / NBRC 100330 / Delta H) (Methanobacterium thermoautotrophicum).